The following is a 347-amino-acid chain: Transcription factor JunB (347 aa).

Residues Lys4, Lys33, and Lys36 each participate in a glycyl lysine isopeptide (Lys-Gly) (interchain with G-Cter in SUMO2) cross-link. The tract at residues 50–77 is disordered; it reads LKAPGARGPGPEGNGGGSYFSSQGSDTG. Positions 56 to 67 are enriched in gly residues; that stretch reads RGPGPEGNGGGS. Residues 68–77 show a composition bias toward polar residues; the sequence is YFSSQGSDTG. A Glycyl lysine isopeptide (Lys-Gly) (interchain with G-Cter in SUMO2) cross-link involves residue Lys81. Thr102 and Thr104 each carry phosphothreonine. Residue Ser117 is modified to Phosphoserine. Residue Lys141 forms a Glycyl lysine isopeptide (Lys-Gly) (interchain with G-Cter in SUMO2) linkage. Lys240 carries the N6-acetyllysine; alternate modification. Lys240 participates in a covalent cross-link: Glycyl lysine isopeptide (Lys-Gly) (interchain with G-Cter in SUMO1); alternate. Lys240 is covalently cross-linked (Glycyl lysine isopeptide (Lys-Gly) (interchain with G-Cter in SUMO2); alternate). Positions 241–253 are enriched in basic and acidic residues; that stretch reads EEPQTVPEARSRD. A disordered region spans residues 241–260; it reads EEPQTVPEARSRDATPPVSP. Ser251 carries the post-translational modification Phosphoserine. At Thr255 the chain carries Phosphothreonine. At Ser259 the chain carries Phosphoserine. The tract at residues 268-295 is basic motif; the sequence is RIKVERKRLRNRLAATKCRKRKLERIAR. Residues 268-331 form the bZIP domain; sequence RIKVERKRLR…AQLKQKVMTH (64 aa). The interval 296-324 is leucine-zipper; it reads LEDKVKTLKAENAGLSSTAGLLREQVAQL. Residue Lys343 forms a Glycyl lysine isopeptide (Lys-Gly) (interchain with G-Cter in SUMO2) linkage.

Belongs to the bZIP family. Jun subfamily. In terms of assembly, binds DNA as a homodimer or as a heterodimer with another member of the Jun/Fos family. Component of an AP-1 transcription factor complex composed of JUN-FOS heterodimers. As part of the AP-1 transcription factor complex, forms heterodimers with FOSB, thereby binding to the AP-1 consensus sequence and stimulating transcription. Interacts with ITCH (via its WW domains). Post-translationally, ubiquitinated by ITCH, leading to its degradation.

The protein resides in the nucleus. Its function is as follows. Transcription factor involved in regulating gene activity following the primary growth factor response. Binds to the DNA sequence 5'-TGA[GC]TCA-3'. Heterodimerizes with proteins of the FOS family to form an AP-1 transcription complex, thereby enhancing its DNA binding activity to an AP-1 consensus sequence and its transcriptional activity. The polypeptide is Transcription factor JunB (JUNB) (Bos taurus (Bovine)).